Consider the following 146-residue polypeptide: Hemoglobin subunit beta-2 (146 aa).

Residues 2 to 146 form the Globin domain; sequence HWSAEEKQLI…VAHALARRYH (145 aa). Heme b-binding residues include His-63 and His-92.

The protein belongs to the globin family. Heterotetramer of two alpha chains and two beta chains. In terms of tissue distribution, red blood cells.

In terms of biological role, involved in oxygen transport from the lung to the various peripheral tissues. The chain is Hemoglobin subunit beta-2 (HBB2) from Naja naja (Indian cobra).